Consider the following 450-residue polypeptide: Phosphoglucosamine mutase (450 aa).

S104 serves as the catalytic Phosphoserine intermediate. S104, D243, D245, and D247 together coordinate Mg(2+). At S104 the chain carries Phosphoserine.

The protein belongs to the phosphohexose mutase family. The cofactor is Mg(2+). Post-translationally, activated by phosphorylation.

The enzyme catalyses alpha-D-glucosamine 1-phosphate = D-glucosamine 6-phosphate. In terms of biological role, catalyzes the conversion of glucosamine-6-phosphate to glucosamine-1-phosphate. This Cutibacterium acnes (strain DSM 16379 / KPA171202) (Propionibacterium acnes) protein is Phosphoglucosamine mutase.